A 179-amino-acid polypeptide reads, in one-letter code: Large ribosomal subunit protein uL6 (179 aa).

Belongs to the universal ribosomal protein uL6 family. As to quaternary structure, part of the 50S ribosomal subunit.

Functionally, this protein binds to the 23S rRNA, and is important in its secondary structure. It is located near the subunit interface in the base of the L7/L12 stalk, and near the tRNA binding site of the peptidyltransferase center. The sequence is that of Large ribosomal subunit protein uL6 from Acidothermus cellulolyticus (strain ATCC 43068 / DSM 8971 / 11B).